A 218-amino-acid polypeptide reads, in one-letter code: Probable nicotinate-nucleotide adenylyltransferase (218 aa).

The protein belongs to the NadD family.

It catalyses the reaction nicotinate beta-D-ribonucleotide + ATP + H(+) = deamido-NAD(+) + diphosphate. Its pathway is cofactor biosynthesis; NAD(+) biosynthesis; deamido-NAD(+) from nicotinate D-ribonucleotide: step 1/1. Its function is as follows. Catalyzes the reversible adenylation of nicotinate mononucleotide (NaMN) to nicotinic acid adenine dinucleotide (NaAD). This Acidithiobacillus ferrooxidans (strain ATCC 23270 / DSM 14882 / CIP 104768 / NCIMB 8455) (Ferrobacillus ferrooxidans (strain ATCC 23270)) protein is Probable nicotinate-nucleotide adenylyltransferase.